A 295-amino-acid polypeptide reads, in one-letter code: Mediator of RNA polymerase II transcription subunit 27 (295 aa).

This sequence belongs to the Mediator complex subunit 27 family. As to quaternary structure, component of the Mediator complex.

The protein localises to the nucleus. In terms of biological role, component of the Mediator complex, a coactivator involved in the regulated transcription of nearly all RNA polymerase II-dependent genes. Mediator functions as a bridge to convey information from gene-specific regulatory proteins to the basal RNA polymerase II transcription machinery. Mediator is recruited to promoters by direct interactions with regulatory proteins and serves as a scaffold for the assembly of a functional preinitiation complex with RNA polymerase II and the general transcription factors. The polypeptide is Mediator of RNA polymerase II transcription subunit 27 (MED27) (Aedes aegypti (Yellowfever mosquito)).